Consider the following 449-residue polypeptide: MFS acetylaranotin efflux transporter ataA (449 aa).

7 helical membrane-spanning segments follow: residues 6-26, 45-65, 67-87, 115-135, 155-175, 182-202, and 227-247; these read SVYV…TAIP, YLLV…YFPI, WVFL…GAAP, FYIN…FLHV, LGVV…QWGG, NGRI…FLAI, and LFMT…PIWF. Residue asparagine 252 is glycosylated (N-linked (GlcNAc...) asparagine). Helical transmembrane passes span 260–280, 287–307, 321–341, 349–369, and 420–440; these read IMCL…GGGV, VPFF…MTTF, VLLG…VQAV, VGTA…VSVA, and ALVS…LGAV.

It belongs to the major facilitator superfamily.

Its subcellular location is the cell membrane. In terms of biological role, efflux pump that may provide the dual role of acetylaranotin export and self-protection by allowing the fungus to evade the harmful effect of its own acetylaranotin production. The sequence is that of MFS acetylaranotin efflux transporter ataA from Aspergillus terreus (strain NIH 2624 / FGSC A1156).